Reading from the N-terminus, the 193-residue chain is Superoxide dismutase [Fe] (193 aa).

His27, His75, Asp159, and His163 together coordinate Fe cation.

This sequence belongs to the iron/manganese superoxide dismutase family. In terms of assembly, homodimer. The cofactor is Fe cation.

The enzyme catalyses 2 superoxide + 2 H(+) = H2O2 + O2. Functionally, destroys superoxide anion radicals which are normally produced within the cells and which are toxic to biological systems. The chain is Superoxide dismutase [Fe] (sodB) from Bacteroides fragilis (strain YCH46).